The primary structure comprises 108 residues: Large ribosomal subunit protein uL23 (108 aa).

Belongs to the universal ribosomal protein uL23 family. As to quaternary structure, part of the 50S ribosomal subunit. Contacts protein L29, and trigger factor when it is bound to the ribosome.

One of the early assembly proteins it binds 23S rRNA. One of the proteins that surrounds the polypeptide exit tunnel on the outside of the ribosome. Forms the main docking site for trigger factor binding to the ribosome. The sequence is that of Large ribosomal subunit protein uL23 from Leptothrix cholodnii (strain ATCC 51168 / LMG 8142 / SP-6) (Leptothrix discophora (strain SP-6)).